The sequence spans 193 residues: dCTP deaminase (193 aa).

Residues 110–115 (RSSLAR), aspartate 128, 136–138 (VLE), tyrosine 171, lysine 178, and glutamine 182 each bind dCTP. Glutamate 138 (proton donor/acceptor) is an active-site residue.

It belongs to the dCTP deaminase family. In terms of assembly, homotrimer.

It catalyses the reaction dCTP + H2O + H(+) = dUTP + NH4(+). The protein operates within pyrimidine metabolism; dUMP biosynthesis; dUMP from dCTP (dUTP route): step 1/2. Catalyzes the deamination of dCTP to dUTP. This is dCTP deaminase from Aeromonas salmonicida (strain A449).